A 407-amino-acid chain; its full sequence is Serpin-Z2 (407 aa).

Positions 1-28 are disordered; that stretch reads MDSKRKNQELSTSETADPSLSKTNKKQK. Positions 9-22 are enriched in polar residues; it reads ELSTSETADPSLSK. An RCL region spans residues 344–368; it reads GTEAAAATTVVVVTGSCLWEPKKKI.

Belongs to the serpin family.

Functionally, probable serine protease inhibitor. This Arabidopsis thaliana (Mouse-ear cress) protein is Serpin-Z2.